The following is a 129-amino-acid chain: GEL complex subunit OPTI (129 aa).

Topologically, residues 1–44 (MSGGRRKEEPPQPQLANGALKVSVWSKVLRSDAAWEDKDEFLDV) are cytoplasmic. A helical transmembrane segment spans residues 45–65 (IYWFRQIIAVVLGVIWGVLPL). Arg66 is a topological domain (lumenal). Residues 67–84 (GFLGIAGFCVINAGVLYL) form a helical membrane-spanning segment. Topologically, residues 85-103 (YFSNYLQIDEEEYGGTWEL) are cytoplasmic. A helical transmembrane segment spans residues 104-127 (TKEGFMTSFALFMVIWIIFYTAIH). At 128 to 129 (YD) the chain is on the lumenal side.

Belongs to the EMC6 family. Component of the GET- and EMC-like (GEL) complex, composed of RAB5IF/OPTI and TMCO1. The GEL complex is part of the multi-pass translocon (MPT) complex, composed of three subcomplexes, the GEL complex (composed of RAB5IF/OPTI and TMCO1), the BOS complex (composed of NCLN/Nicalin, NOMO1 and TMEM147) and the PAT complex (composed of WDR83OS/Asterix and CCDC47). The MPT complex associates with the SEC61 complex. Interacts with NDUFS3, NDUFA4, NDUFV1, NDUFA9 and NDUFS8 of the mitochondrial membrane respiratory chain NADH dehydrogenase (Complex I). Interacts with UQCRC2 of the ubiquinol-cytochrome c reductase complex (Complex III). Interacts with COX5A and COX7C of the cytochrome c oxidase complex (Complex IV).

It localises to the endoplasmic reticulum membrane. It is found in the mitochondrion inner membrane. Its function is as follows. Component of the multi-pass translocon (MPT) complex that mediates insertion of multi-pass membrane proteins into the lipid bilayer of membranes. The MPT complex takes over after the SEC61 complex: following membrane insertion of the first few transmembrane segments of proteins by the SEC61 complex, the MPT complex occludes the lateral gate of the SEC61 complex to promote insertion of subsequent transmembrane regions. Within the MPT complex, the GEL subcomplex may mediate insertion of transmembrane regions into the membrane. In addition to its role in multi-pass membrane insertion, RAB5IF/OPTI also acts as an assembly factor for mitochondrial respiratory complexes. In Canis lupus familiaris (Dog), this protein is GEL complex subunit OPTI (RAB5IF).